A 557-amino-acid chain; its full sequence is Dihydroxy-acid dehydratase (557 aa).

C50 is a binding site for [2Fe-2S] cluster. D82 contributes to the Mg(2+) binding site. Position 123 (C123) interacts with [2Fe-2S] cluster. Mg(2+)-binding residues include D124 and K125. K125 bears the N6-carboxylysine mark. A [2Fe-2S] cluster-binding site is contributed by C195. E447 lines the Mg(2+) pocket. S473 functions as the Proton acceptor in the catalytic mechanism.

The protein belongs to the IlvD/Edd family. Homodimer. [2Fe-2S] cluster serves as cofactor. The cofactor is Mg(2+).

It carries out the reaction (2R)-2,3-dihydroxy-3-methylbutanoate = 3-methyl-2-oxobutanoate + H2O. It catalyses the reaction (2R,3R)-2,3-dihydroxy-3-methylpentanoate = (S)-3-methyl-2-oxopentanoate + H2O. The protein operates within amino-acid biosynthesis; L-isoleucine biosynthesis; L-isoleucine from 2-oxobutanoate: step 3/4. It participates in amino-acid biosynthesis; L-valine biosynthesis; L-valine from pyruvate: step 3/4. Functionally, functions in the biosynthesis of branched-chain amino acids. Catalyzes the dehydration of (2R,3R)-2,3-dihydroxy-3-methylpentanoate (2,3-dihydroxy-3-methylvalerate) into 2-oxo-3-methylpentanoate (2-oxo-3-methylvalerate) and of (2R)-2,3-dihydroxy-3-methylbutanoate (2,3-dihydroxyisovalerate) into 2-oxo-3-methylbutanoate (2-oxoisovalerate), the penultimate precursor to L-isoleucine and L-valine, respectively. This chain is Dihydroxy-acid dehydratase, found in Metallosphaera sedula (strain ATCC 51363 / DSM 5348 / JCM 9185 / NBRC 15509 / TH2).